Reading from the N-terminus, the 256-residue chain is GTP cyclohydrolase FolE2 (256 aa).

It belongs to the GTP cyclohydrolase IV family.

It carries out the reaction GTP + H2O = 7,8-dihydroneopterin 3'-triphosphate + formate + H(+). Its pathway is cofactor biosynthesis; 7,8-dihydroneopterin triphosphate biosynthesis; 7,8-dihydroneopterin triphosphate from GTP: step 1/1. Functionally, converts GTP to 7,8-dihydroneopterin triphosphate. The polypeptide is GTP cyclohydrolase FolE2 (Caldicellulosiruptor saccharolyticus (strain ATCC 43494 / DSM 8903 / Tp8T 6331)).